A 444-amino-acid chain; its full sequence is Methylenetetrahydrofolate--tRNA-(uracil-5-)-methyltransferase TrmFO (444 aa).

11 to 16 (GGGLAG) provides a ligand contact to FAD.

It belongs to the MnmG family. TrmFO subfamily. It depends on FAD as a cofactor.

Its subcellular location is the cytoplasm. The catalysed reaction is uridine(54) in tRNA + (6R)-5,10-methylene-5,6,7,8-tetrahydrofolate + NADH + H(+) = 5-methyluridine(54) in tRNA + (6S)-5,6,7,8-tetrahydrofolate + NAD(+). The enzyme catalyses uridine(54) in tRNA + (6R)-5,10-methylene-5,6,7,8-tetrahydrofolate + NADPH + H(+) = 5-methyluridine(54) in tRNA + (6S)-5,6,7,8-tetrahydrofolate + NADP(+). Its function is as follows. Catalyzes the folate-dependent formation of 5-methyl-uridine at position 54 (M-5-U54) in all tRNAs. In Desulfotalea psychrophila (strain LSv54 / DSM 12343), this protein is Methylenetetrahydrofolate--tRNA-(uracil-5-)-methyltransferase TrmFO.